A 539-amino-acid polypeptide reads, in one-letter code: Chloride channel CLIC-like protein 1 (539 aa).

The first 18 residues, 1–18 (MLCRLLLCECLLLITGYA), serve as a signal peptide directing secretion. Over 19 to 184 (HDDDWIDPTD…EDYFGVDPYN (166 aa)) the chain is Lumenal. Residues 41-61 (KSQVRSGTSEKKEVSPDSSEA) are disordered. Residues 185–205 (VFMVLLCLLCLVVLVATELWT) form a helical membrane-spanning segment. Topologically, residues 206–215 (YVRWYTQMKR) are cytoplasmic. A helical transmembrane segment spans residues 216-236 (IFIISFLLSLAWNWIYLYKMA). The Lumenal portion of the chain corresponds to 237–329 (FAQHQANIAG…GEFIKALMKE (93 aa)). The chain crosses the membrane as a helical span at residues 330-350 (IPVLLQIPVLAILALAVLSFC). Residues 351–539 (YGAGRSVPML…GTEPVSSPCG (189 aa)) are Cytoplasmic-facing. Residues 361-410 (RHFGGPDREPPRALEPDDRRRQKGLDYRLHGGAGDADFSYRGPAGSIEQG) are disordered. Residues 364-389 (GGPDREPPRALEPDDRRRQKGLDYRL) show a composition bias toward basic and acidic residues. Ser429, Ser433, and Ser459 each carry phosphoserine. The segment at 444–539 (DTEAQEHPEV…GTEPVSSPCG (96 aa)) is disordered. Residues 475–485 (STPTEYSQSAK) are compositionally biased toward polar residues. Thr476 carries the post-translational modification Phosphothreonine. A phosphoserine mark is found at Ser498, Ser513, and Ser521. The segment covering 512 to 521 (CSPPGGCPPS) has biased composition (low complexity).

Belongs to the chloride channel MCLC family. Homomultimers. Interacts with mitochondrial protein PIGBOS1 (via C-terminus); the interaction occurs at the mitochondria-associated endoplasmic reticulum (ER) membrane, a zone of contact between the ER and mitochondrial membranes, but does not appear to play a role in ER-mitochondria tethering and is not affected by ER stress. Interacts with CALR. As to expression, expressed in cerebellum (at protein level).

The protein localises to the endoplasmic reticulum membrane. The enzyme catalyses chloride(in) = chloride(out). It carries out the reaction bromide(in) = bromide(out). The catalysed reaction is nitrate(in) = nitrate(out). It catalyses the reaction fluoride(in) = fluoride(out). With respect to regulation, activated by membrane phosphatidylinositol 4,5-bisphosphate (PI(4,5)P2, PIP2). Inhibited by lumenal Ca(2+). Its function is as follows. Anion-selective channel with Ca(2+)-dependent and voltage-independent gating. Permeable to small monovalent anions with selectivity for bromide &gt; chloride &gt; nitrate &gt; fluoride. Operates in the endoplasmic reticulum (ER) membrane where it mediates chloride efflux to compensate for the loss of positive charges from the ER lumen upon Ca(2+) release. Contributes to the maintenance of ER Ca(2+) pools and activation of unfolded protein response to prevent accumulation of misfolded proteins in the ER lumen. Particularly involved in ER homeostasis mechanisms underlying motor neurons and retinal photoreceptors survival. The chain is Chloride channel CLIC-like protein 1 from Mus musculus (Mouse).